The primary structure comprises 824 residues: Translation initiation factor IF-2 (824 aa).

The disordered stretch occupies residues 1–234 (MSDQDGKKPL…RQKAMGGSVD (234 aa)). Composition is skewed to basic and acidic residues over residues 59–75 (GGKRDKSVPDAEMDRRL) and 82–144 (KARE…RRNA). Low complexity predominate over residues 145–159 (PPEAAAPAVDPAAAA). Basic and acidic residues predominate over residues 170–186 (ARREPERDNKRENRSRG). The tr-type G domain maps to 321–491 (PRPPVITIMG…ALQAELLELK (171 aa)). Positions 330–337 (GHVDHGKT) are G1. 330-337 (GHVDHGKT) is a GTP binding site. The interval 355-359 (GITQH) is G2. Residues 377–380 (DTPG) are G3. GTP is bound by residues 377–381 (DTPGH) and 431–434 (NKID). The G4 stretch occupies residues 431–434 (NKID). The tract at residues 467–469 (SAM) is G5.

The protein belongs to the TRAFAC class translation factor GTPase superfamily. Classic translation factor GTPase family. IF-2 subfamily.

It localises to the cytoplasm. In terms of biological role, one of the essential components for the initiation of protein synthesis. Protects formylmethionyl-tRNA from spontaneous hydrolysis and promotes its binding to the 30S ribosomal subunits. Also involved in the hydrolysis of GTP during the formation of the 70S ribosomal complex. This is Translation initiation factor IF-2 from Jannaschia sp. (strain CCS1).